Reading from the N-terminus, the 373-residue chain is MVRNIVSRLCSQLFALPSSSLQERDPCSVTEYSGLATAVSSCKNIVLNGFQVPTGKQLDLSSLQNDSTVTFKGTTTFATTADNDFNPIVISGSNITITGASGHVIDGNGQAYWDGKGSNSNSNQKPDHFIVVQKTTGNSKITNLNIQNWPVHCFDITGSSQLTISGLILDNRAGDKPNAKSGSLPAAHNTDGFDISSSDHVTLDNNHVYNQDDCVAVTSGTNIVVSNMYCSGGHGLSIGSVGGKSDNVVDGVQFLSSQVVNSQNGCRIKSNSGATGTINNVTYQNIALTNISTYGVDVQQDYLNGGPTGKPTNGVKISNIKFIKVTGTVASSAQDWFILCGDGSCSGFTFSGNAITGGGKTSSCNYPTNTCPS.

A signal peptide spans 1-24 (MVRNIVSRLCSQLFALPSSSLQER). C27 and C42 are joined by a disulfide. N-linked (GlcNAc...) asparagine glycosylation is found at N65 and N94. PbH1 repeat units follow at residues 136–158 (TGNS…DITG), 159–197 (SSQL…DISS), 198–219 (SDHV…AVTS), 220–240 (GTNI…SIGS), 249–270 (VDGV…RIKS), 278–300 (INNV…DVQQ), 312–333 (TNGV…ASSA), and 345–369 (CSGF…YPTN). D212 serves as the catalytic Proton donor. C214 and C230 form a disulfide bridge. The active site involves H234. N280 and N290 each carry an N-linked (GlcNAc...) asparagine glycan. Cystine bridges form between C340–C345 and C364–C371.

It belongs to the glycosyl hydrolase 28 family.

The protein localises to the secreted. It catalyses the reaction (1,4-alpha-D-galacturonosyl)n+m + H2O = (1,4-alpha-D-galacturonosyl)n + (1,4-alpha-D-galacturonosyl)m.. In terms of biological role, involved in maceration and soft-rotting of plant tissue. Hydrolyzes the 1,4-alpha glycosidic bonds of de-esterified pectate in the smooth region of the plant cell wall. The polypeptide is Polygalacturonase (PGA) (Fusarium fujikuroi (Bakanae and foot rot disease fungus)).